A 267-amino-acid chain; its full sequence is 4-hydroxy-tetrahydrodipicolinate reductase (267 aa).

NAD(+) contacts are provided by residues 9-14 and aspartate 35; that span reads GAAGRM. Arginine 36 provides a ligand contact to NADP(+). Residues 99-101 and 123-126 contribute to the NAD(+) site; these read GTT and APNY. The active-site Proton donor/acceptor is the histidine 156. Histidine 157 serves as a coordination point for (S)-2,3,4,5-tetrahydrodipicolinate. Lysine 160 (proton donor) is an active-site residue. 166 to 167 serves as a coordination point for (S)-2,3,4,5-tetrahydrodipicolinate; sequence GT.

It belongs to the DapB family.

Its subcellular location is the cytoplasm. It catalyses the reaction (S)-2,3,4,5-tetrahydrodipicolinate + NAD(+) + H2O = (2S,4S)-4-hydroxy-2,3,4,5-tetrahydrodipicolinate + NADH + H(+). The catalysed reaction is (S)-2,3,4,5-tetrahydrodipicolinate + NADP(+) + H2O = (2S,4S)-4-hydroxy-2,3,4,5-tetrahydrodipicolinate + NADPH + H(+). It functions in the pathway amino-acid biosynthesis; L-lysine biosynthesis via DAP pathway; (S)-tetrahydrodipicolinate from L-aspartate: step 4/4. Functionally, catalyzes the conversion of 4-hydroxy-tetrahydrodipicolinate (HTPA) to tetrahydrodipicolinate. The protein is 4-hydroxy-tetrahydrodipicolinate reductase of Alkalilimnicola ehrlichii (strain ATCC BAA-1101 / DSM 17681 / MLHE-1).